Here is a 159-residue protein sequence, read N- to C-terminus: Transcriptional repressor NrdR (159 aa).

The span at 1-11 shows a compositional bias: polar residues; sequence MQCPTCQNTDS. Positions 1-21 are disordered; it reads MQCPTCQNTDSRVLESRSADS. Residues 3–34 fold into a zinc finger; sequence CPTCQNTDSRVLESRSADSGKSVRRRRECLNC. The ATP-cone domain maps to 49–139; the sequence is VSVLKKDGSR…VYRKFNGVKD (91 aa).

It belongs to the NrdR family. It depends on Zn(2+) as a cofactor.

In terms of biological role, negatively regulates transcription of bacterial ribonucleotide reductase nrd genes and operons by binding to NrdR-boxes. This is Transcriptional repressor NrdR from Prochlorococcus marinus (strain MIT 9301).